A 509-amino-acid chain; its full sequence is Maturase K (509 aa).

It belongs to the intron maturase 2 family. MatK subfamily.

It is found in the plastid. The protein resides in the chloroplast. In terms of biological role, usually encoded in the trnK tRNA gene intron. Probably assists in splicing its own and other chloroplast group II introns. This is Maturase K from Nymphaea odorata (White water lily).